The chain runs to 272 residues: Type III pantothenate kinase (272 aa).

An ATP-binding site is contributed by 6–13 (DVRNTHTV). 109–112 (GADR) contacts substrate. D111 (proton acceptor) is an active-site residue. Position 131 (D131) interacts with K(+). Position 134 (S134) interacts with ATP. A substrate-binding site is contributed by T186.

Belongs to the type III pantothenate kinase family. As to quaternary structure, homodimer. It depends on NH4(+) as a cofactor. K(+) is required as a cofactor.

It is found in the cytoplasm. It carries out the reaction (R)-pantothenate + ATP = (R)-4'-phosphopantothenate + ADP + H(+). It functions in the pathway cofactor biosynthesis; coenzyme A biosynthesis; CoA from (R)-pantothenate: step 1/5. Functionally, catalyzes the phosphorylation of pantothenate (Pan), the first step in CoA biosynthesis. The sequence is that of Type III pantothenate kinase from Mycobacterium bovis (strain BCG / Pasteur 1173P2).